We begin with the raw amino-acid sequence, 215 residues long: Small ribosomal subunit protein eS1 (215 aa).

Belongs to the eukaryotic ribosomal protein eS1 family.

The protein is Small ribosomal subunit protein eS1 of Thermoplasma volcanium (strain ATCC 51530 / DSM 4299 / JCM 9571 / NBRC 15438 / GSS1).